Reading from the N-terminus, the 245-residue chain is 1-(5-phosphoribosyl)-5-[(5-phosphoribosylamino)methylideneamino] imidazole-4-carboxamide isomerase (245 aa).

Asp-8 serves as the catalytic Proton acceptor. The active-site Proton donor is Asp-129.

It belongs to the HisA/HisF family.

The protein localises to the cytoplasm. It catalyses the reaction 1-(5-phospho-beta-D-ribosyl)-5-[(5-phospho-beta-D-ribosylamino)methylideneamino]imidazole-4-carboxamide = 5-[(5-phospho-1-deoxy-D-ribulos-1-ylimino)methylamino]-1-(5-phospho-beta-D-ribosyl)imidazole-4-carboxamide. Its pathway is amino-acid biosynthesis; L-histidine biosynthesis; L-histidine from 5-phospho-alpha-D-ribose 1-diphosphate: step 4/9. The protein is 1-(5-phosphoribosyl)-5-[(5-phosphoribosylamino)methylideneamino] imidazole-4-carboxamide isomerase of Rhodopseudomonas palustris (strain HaA2).